A 535-amino-acid polypeptide reads, in one-letter code: Succinate-semialdehyde dehydrogenase, mitochondrial (535 aa).

The transit peptide at 1–47 directs the protein to the mitochondrion; sequence MATCFWLRSCGARRLGSTFPGCRLRPRAGGLVPASGPAPGPAQLRCY. Lysine 126 is modified (N6-acetyllysine; alternate). N6-succinyllysine; alternate is present on lysine 126. Residues lysine 135 and lysine 184 each carry the N6-succinyllysine modification. Residues arginine 213 and 228–231 contribute to the NAD(+) site; that span reads KPAE. Arginine 213 provides a ligand contact to substrate. N6-acetyllysine; alternate is present on lysine 265. N6-succinyllysine; alternate is present on lysine 265. NAD(+) is bound at residue 284–289; sequence GSTTTG. Glutamate 306 acts as the Proton acceptor in catalysis. Arginine 334 lines the substrate pocket. Cysteine 340 (nucleophile) is an active-site residue. Residues cysteine 340 and cysteine 342 are joined by a disulfide bond. The residue at position 365 (lysine 365) is an N6-acetyllysine. An N6-succinyllysine modification is found at lysine 402. Lysine 411 is modified (N6-acetyllysine). Serine 498 is a substrate binding site. A Phosphoserine modification is found at serine 499.

This sequence belongs to the aldehyde dehydrogenase family. Homotetramer.

Its subcellular location is the mitochondrion. The enzyme catalyses succinate semialdehyde + NAD(+) + H2O = succinate + NADH + 2 H(+). Its pathway is amino-acid degradation; 4-aminobutanoate degradation. Its activity is regulated as follows. Redox-regulated. Inhibited under oxydizing conditions. Functionally, catalyzes one step in the degradation of the inhibitory neurotransmitter gamma-aminobutyric acid (GABA). The polypeptide is Succinate-semialdehyde dehydrogenase, mitochondrial (ALDH5A1) (Hylobates lar (Lar gibbon)).